A 353-amino-acid polypeptide reads, in one-letter code: Aliphatic aldoxime dehydratase (353 aa).

An aliphatic aldoxime is bound at residue Ser219. His299 is a binding site for heme b. His320 provides a ligand contact to an aliphatic aldoxime. His320 is a catalytic residue.

The protein belongs to the heme-containing dehydratase family. Homodimer. Heme b is required as a cofactor.

It catalyses the reaction an aliphatic aldoxime = a nitrile + H2O. With respect to regulation, active when the heme iron is in the ferrous state. The activity is enhanced by reducing agents, such as Na(2)S, Na(2)S(2)(O4), 2-mercaptoethanol, and L-cysteine and supplementary additions of electron acceptors such as flavins, sulfite ion, and vitamin K3. The effect of various chemicals on the enzyme activity is different in the presence and absence of the reducing reagent, Na(2)S, which acts not only as a reductant but also changes the substrate specificity of the enzyme. In terms of biological role, catalyzes the dehydration of aldoximes to their corresponding nitrile. Is active toward various arylalkyl- and alkyl-aldoximes, and to a lesser extent toward aryl-aldoximes. In Rhodococcus erythropolis (Arthrobacter picolinophilus), this protein is Aliphatic aldoxime dehydratase.